Reading from the N-terminus, the 234-residue chain is Glycoprotein BDLF3 (234 aa).

The first 28 residues, 1-28, serve as a signal peptide directing secretion; the sequence is MAHARDKAGAVMAMILICETSLIWTSSG. The segment at 29 to 62 is disordered; that stretch reads SSTASAGNVTGTTAVTTPSPSASGPSTNQSTTLT. N-linked (GlcNAc...) asparagine; by host glycans are attached at residues asparagine 36, asparagine 56, asparagine 77, asparagine 96, asparagine 101, asparagine 110, asparagine 127, asparagine 144, and asparagine 159. Positions 116–138 are disordered; sequence AGTGTSTGVTSNVTTRSSSTTSA. The helical transmembrane segment at 187–207 threads the bilayer; the sequence is LVFVGLTFLMLILIFAAGLMM.

The protein belongs to the Epstein-Barr virus BDLF3 protein family.

The protein resides in the membrane. The sequence is that of Glycoprotein BDLF3 from Homo sapiens (Human).